Here is a 171-residue protein sequence, read N- to C-terminus: Ribulose bisphosphate carboxylase small subunit, chloroplastic (171 aa).

A chloroplast-targeting transit peptide spans 1–50 (MATGAGAGAATVVSAFTGLKSTAQFPSSFKMSNAAAEWEQKTTSNGGRVR).

The protein belongs to the RuBisCO small chain family. In terms of assembly, heterohexadecamer of 8 large and 8 small subunits.

It is found in the plastid. The protein localises to the chloroplast. RuBisCO catalyzes two reactions: the carboxylation of D-ribulose 1,5-bisphosphate, the primary event in carbon dioxide fixation, as well as the oxidative fragmentation of the pentose substrate. Both reactions occur simultaneously and in competition at the same active site. Although the small subunit is not catalytic it is essential for maximal activity. In Pinus thunbergii (Japanese black pine), this protein is Ribulose bisphosphate carboxylase small subunit, chloroplastic.